Here is a 33-residue protein sequence, read N- to C-terminus: Cytochrome b6-f complex subunit 6 (33 aa).

The chain crosses the membrane as a helical span at residues 4–24; sequence ITIISYFGLLLASIIFTLVLF.

Belongs to the PetL family. In terms of assembly, the 4 large subunits of the cytochrome b6-f complex are cytochrome b6, subunit IV (17 kDa polypeptide, PetD), cytochrome f and the Rieske protein, while the 4 small subunits are PetG, PetL, PetM and PetN. The complex functions as a dimer.

Its subcellular location is the plastid. It localises to the chloroplast thylakoid membrane. Component of the cytochrome b6-f complex, which mediates electron transfer between photosystem II (PSII) and photosystem I (PSI), cyclic electron flow around PSI, and state transitions. PetL is important for photoautotrophic growth as well as for electron transfer efficiency and stability of the cytochrome b6-f complex. The sequence is that of Cytochrome b6-f complex subunit 6 from Pinus mugo (Dwarf mountain pine).